The primary structure comprises 243 residues: Ribonuclease PH (243 aa).

Phosphate-binding positions include R91 and 129 to 131 (GTR).

This sequence belongs to the RNase PH family. Homohexameric ring arranged as a trimer of dimers.

The enzyme catalyses tRNA(n+1) + phosphate = tRNA(n) + a ribonucleoside 5'-diphosphate. In terms of biological role, phosphorolytic 3'-5' exoribonuclease that plays an important role in tRNA 3'-end maturation. Removes nucleotide residues following the 3'-CCA terminus of tRNAs; can also add nucleotides to the ends of RNA molecules by using nucleoside diphosphates as substrates, but this may not be physiologically important. Probably plays a role in initiation of 16S rRNA degradation (leading to ribosome degradation) during starvation. This is Ribonuclease PH from Burkholderia mallei (strain NCTC 10247).